The sequence spans 172 residues: MAKPTVNVNQAIRAREIRVVGANSEQLGIMPLNEALALAESQQLDLVEVSPTAVPPVCRIMDYGKFKYQQSKKLQEAKKKQSHVVVKEVKLRPKTDEHDLQFKIKHVRRFIEEGNKAKVTLVFRGREITHMEFGVRALERVASEIEDIAVIEMKPKMEGRSMFMIVAPKVKK.

The protein belongs to the IF-3 family. As to quaternary structure, monomer.

Its subcellular location is the cytoplasm. In terms of biological role, IF-3 binds to the 30S ribosomal subunit and shifts the equilibrium between 70S ribosomes and their 50S and 30S subunits in favor of the free subunits, thus enhancing the availability of 30S subunits on which protein synthesis initiation begins. The chain is Translation initiation factor IF-3 from Geobacter metallireducens (strain ATCC 53774 / DSM 7210 / GS-15).